A 580-amino-acid polypeptide reads, in one-letter code: XK-related protein 7 (580 aa).

The span at 1 to 22 (MAAKSDGAAAVAGPGPEGPAGA) shows a compositional bias: low complexity. Residues 1–28 (MAAKSDGAAAVAGPGPEGPAGADRGGAG) are disordered. 8 consecutive transmembrane segments (helical) span residues 59–79 (WVLC…WLAA), 89–109 (YFGL…LLSF), 260–280 (LLTA…LASY), 303–323 (VLWH…FASV), 326–346 (LYFG…VIQG), 355–375 (WEEI…WFNV), 384–404 (VTLY…FWYS), and 415–435 (LILV…MCVY). Residues 470-516 (TSPPRSLPRTTGAERDGAAVGGERAGTPTPPVFQVRPGLPPTPVARP) are disordered.

It belongs to the XK family.

It localises to the cell membrane. The chain is XK-related protein 7 from Rattus norvegicus (Rat).